Here is a 579-residue protein sequence, read N- to C-terminus: Protein inscuteable homolog (579 aa).

Residues 74–89 (SVQRWMEDLKLMTECE) are important for interaction with GPSM2. The short motif at 576 to 579 (ESFV) is the PDZ-binding element.

As to quaternary structure, interacts with ALS2CR19/PAR3B and GPSM1/AGS3. Interacts with F2RL2/PAR3. Interacts with GPSM2/LGN (via TPR repeat region). Expressed in brain, kidney, liver, testis and skin.

It localises to the cytoplasm. Its subcellular location is the cell cortex. Its function is as follows. May function as an adapter linking the Par3 complex to the GPSM1/GPSM2 complex. Involved in spindle orientation during mitosis. May regulate cell proliferation and differentiation in the developing nervous system. May play a role in the asymmetric division of fibroblasts and participate in the process of stratification of the squamous epithelium. The protein is Protein inscuteable homolog (Insc) of Mus musculus (Mouse).